The chain runs to 514 residues: Maltose/maltodextrin transport system permease protein MalF (514 aa).

Over 1 to 16 the chain is Cytoplasmic; it reads MDVIKKKHWWQSDQLK. Residues 17-36 form a helical membrane-spanning segment; the sequence is WSVIGLLGLLVGYLVVLMYV. Over 37–39 the chain is Periplasmic; that stretch reads QGE. A helical membrane pass occupies residues 40–57; sequence YLFAIMTLILSSAGLYIF. The Cytoplasmic portion of the chain corresponds to 58-69; sequence ANRKTYAWRYVY. Residues 70-92 form a helical membrane-spanning segment; that stretch reads PGLAGMGLFVLFPLVCTIAIAFT. Topologically, residues 93-283 are periplasmic; sequence NYSSTNQLTF…QKPFFAIFVW (191 aa). The 225-residue stretch at 281–505 folds into the ABC transmembrane type-1 domain; sequence FVWTVVFSVL…LLVGALAIVN (225 aa). The helical transmembrane segment at 284 to 306 threads the bilayer; sequence TVVFSVLTVVLTVAVGMVLACLV. The Cytoplasmic portion of the chain corresponds to 307-318; the sequence is QWEALKGKAIYR. A helical membrane pass occupies residues 319–341; the sequence is VLLILPYAVPSFISILIFKGLFN. Residues 342 to 369 are Periplasmic-facing; sequence QSFGEINMMLSALFGIKPAWFSDPNTAR. The helical transmembrane segment at 370-392 threads the bilayer; that stretch reads AMVIIVNTWLGYPYMMILCMGLL. At 393–412 the chain is on the cytoplasmic side; the sequence is KAIPDDLYEASAMDGAGPFQ. Residues 413 to 435 form a helical membrane-spanning segment; the sequence is NFFKITLPLLIKPLTPLMIASFA. Over 436–483 the chain is Periplasmic; that stretch reads FNFNNFVLIQLLTNGGPDRLGTTTPAGYTDLLVSYTYRIAFEGGGGQD. Residues 484–506 traverse the membrane as a helical segment; the sequence is FGLAAAIATLIFLLVGALAIVNL. Residues 507-514 lie on the Cytoplasmic side of the membrane; it reads KATRMKFD.

Belongs to the binding-protein-dependent transport system permease family. MalFG subfamily. In terms of assembly, the complex is composed of two ATP-binding proteins (MalK), two transmembrane proteins (MalG and MalF) and a solute-binding protein (MalE).

The protein localises to the cell inner membrane. Its function is as follows. Part of the ABC transporter complex MalEFGK involved in maltose/maltodextrin import. Probably responsible for the translocation of the substrate across the membrane. This Salmonella typhimurium (strain LT2 / SGSC1412 / ATCC 700720) protein is Maltose/maltodextrin transport system permease protein MalF (malF).